Reading from the N-terminus, the 857-residue chain is MDIRKTFLDYFQSKGHKLVPSSPLVPDDPTLMFTNAGMVQFKNIFTGEAPIPNPPRATSSQTCLRAGGKHNDLDNVGYTARHHTLFEMLGNFSFADYFKEDAIAYAWEFVTDEKYLDLPVEKIWVTVHDSDDEAYDIWKKYISEDRIMRFGDKDNFWQMGDTGPCGPCSEIFYDQGAEHFHSEEDVMGGEGDRFLEIWNLVFMQYERDEKGTLNPLPKPSIDTGMGLERVVAIKEGVFNNYHSSLFMPFLEKIGELVGKPYDFDAPNSASYRVIADHLRSVSFLLAQGVNFDKEGRGYVLRRIMRRAIRHGYLLGLREPFMYKLVDTLVDLMGKQYDYLASRAEAIKTSMKMEEERFFETIEAGIKLFNEELKNTQDVFNGEVAFKLYDTFGFPLDLTEDMLREKNIRLDIDAFNKKMEAQKAQSKANWKGTGDAATTGDFKLLKEEFNTNEFVGYETQEVTTKVLALLDENFKKTDAINGKGWVLLEKTPFYAESGGQVGDKGKLEIRNEKLEIRVLDTKKFLDMNLSEVEGKLSVGDEVKAVVDPSRVEIEKHHSATHLLHAGLRAILGDHIAQAGSLNDDKRLRFDFSHPKAMTAEEIEKVEAWVNDKISRAIPRKTEIMSVDEAKKAGAMALFGEKYGNEVRVVSMGDASIELCGGTHVDNTAQIGLFMITKESGVSAGVRRIEAICGRAAVEKVKALREELSQIKEEVKNQNPIAGIAKLKEQIKTLKSEVASAMSASQKELSTVNVNGVNVIVEEVQTGDIKSMIDDVKNKYDNVAVMLFQKKGDKVLLAAGSKNTPIKAGDWIKAIAPIVGGGGGGRPDFAQAGGKDASRITTALEEAKVYLSEILEGGN.

Zn(2+)-binding residues include histidine 556, histidine 560, cysteine 658, and histidine 662.

Belongs to the class-II aminoacyl-tRNA synthetase family. Zn(2+) is required as a cofactor.

The protein resides in the cytoplasm. The enzyme catalyses tRNA(Ala) + L-alanine + ATP = L-alanyl-tRNA(Ala) + AMP + diphosphate. Functionally, catalyzes the attachment of alanine to tRNA(Ala) in a two-step reaction: alanine is first activated by ATP to form Ala-AMP and then transferred to the acceptor end of tRNA(Ala). Also edits incorrectly charged Ser-tRNA(Ala) and Gly-tRNA(Ala) via its editing domain. In Sulfurovum sp. (strain NBC37-1), this protein is Alanine--tRNA ligase.